The following is a 105-amino-acid chain: Iron-sulfur cluster assembly protein CyaY (105 aa).

This sequence belongs to the frataxin family.

Functionally, involved in iron-sulfur (Fe-S) cluster assembly. May act as a regulator of Fe-S biogenesis. The chain is Iron-sulfur cluster assembly protein CyaY from Paraburkholderia phytofirmans (strain DSM 17436 / LMG 22146 / PsJN) (Burkholderia phytofirmans).